Here is a 62-residue protein sequence, read N- to C-terminus: Small EDRK-rich factor 1 (62 aa).

Composition is skewed to basic and acidic residues over residues 1 to 30 (MARGNQREIARQKNMKKTQEISKGKRKEDS) and 50 to 62 (IANEKKSMQTTEK). Positions 1 to 62 (MARGNQREIA…EKKSMQTTEK (62 aa)) are disordered.

The protein belongs to the SERF family. Interacts with SNCA; this interaction promotes the aggregation of SNCA. As to expression, expressed in brain (at protein level). Highly expressed in the testis.

Its subcellular location is the cytoplasm. It is found in the cytosol. The protein localises to the nucleus. Positive regulator of amyloid protein aggregation and proteotoxicity. Induces conformational changes in amyloid proteins, such as APP, HTT, and SNCA, driving them into compact formations preceding the formation of aggregates. The chain is Small EDRK-rich factor 1 (Serf1) from Mus musculus (Mouse).